The sequence spans 1172 residues: DNA-directed RNA polymerases IV and V subunit 2 (1172 aa).

Residue D786 participates in Mg(2+) binding. The Zn(2+) site is built by C1108, C1111, C1133, and C1136. The C4-type zinc finger occupies 1108–1136 (CRKCKTYANVIERTPSSGRKIRGPYCRVC).

It belongs to the RNA polymerase beta chain family. As to quaternary structure, component of the RNA polymerase IV and V complexes. Interacts with SSH1, NRPD1 and NRPE1. As to expression, mostly expressed in seedlings, flowers and roots, present ubiquitously, except in sperm cells.

Its subcellular location is the nucleus. It carries out the reaction RNA(n) + a ribonucleoside 5'-triphosphate = RNA(n+1) + diphosphate. Functionally, DNA-dependent RNA polymerase catalyzes the transcription of DNA into RNA using the four ribonucleoside triphosphates as substrates. Second largest component of RNA polymerases IV and V which mediate short-interfering RNAs (siRNA) accumulation and subsequent RNA-directed DNA methylation-dependent (RdDM) transcriptional gene silencing (TGS) of endogenous repeated sequences, including transposable elements. Proposed to contribute to the polymerase catalytic activity and forms the polymerase active center together with the largest subunit. Also required for full erasure of methylation when the RNA trigger is withdrawn. Required for intercellular RNA interference (RNAi) leading to systemic post-transcriptional gene silencing. Involved in the maintenance of post-transcriptional RNA silencing. During interphase, mediates siRNA-independent heterochromatin association and methylation into chromocenters and condensation and cytosine methylation at pericentromeric major repeats. Required for complete maintenance of the 35S promoter homology-dependent TGS in transgenic plants and for the initial establishment of DNA methylation. This chain is DNA-directed RNA polymerases IV and V subunit 2 (NRPD2), found in Arabidopsis thaliana (Mouse-ear cress).